A 376-amino-acid polypeptide reads, in one-letter code: Chorismate synthase (376 aa).

Residues R39 and R45 each contribute to the NADP(+) site. FMN is bound by residues R115 to S117, G276, K291 to T295, and R317.

It belongs to the chorismate synthase family. In terms of assembly, homotetramer. FMNH2 is required as a cofactor.

It catalyses the reaction 5-O-(1-carboxyvinyl)-3-phosphoshikimate = chorismate + phosphate. It functions in the pathway metabolic intermediate biosynthesis; chorismate biosynthesis; chorismate from D-erythrose 4-phosphate and phosphoenolpyruvate: step 7/7. Functionally, catalyzes the anti-1,4-elimination of the C-3 phosphate and the C-6 proR hydrogen from 5-enolpyruvylshikimate-3-phosphate (EPSP) to yield chorismate, which is the branch point compound that serves as the starting substrate for the three terminal pathways of aromatic amino acid biosynthesis. This reaction introduces a second double bond into the aromatic ring system. This chain is Chorismate synthase, found in Thermotoga sp. (strain RQ2).